Consider the following 417-residue polypeptide: Serine--tRNA ligase (417 aa).

226–228 (TSE) contacts L-serine. ATP contacts are provided by residues 257-259 (RRE) and Val-273. Glu-280 contributes to the L-serine binding site. An ATP-binding site is contributed by 344–347 (ELTS). Position 379 (Thr-379) interacts with L-serine.

It belongs to the class-II aminoacyl-tRNA synthetase family. Type-1 seryl-tRNA synthetase subfamily. In terms of assembly, homodimer. The tRNA molecule binds across the dimer.

It localises to the cytoplasm. It carries out the reaction tRNA(Ser) + L-serine + ATP = L-seryl-tRNA(Ser) + AMP + diphosphate + H(+). The catalysed reaction is tRNA(Sec) + L-serine + ATP = L-seryl-tRNA(Sec) + AMP + diphosphate + H(+). The protein operates within aminoacyl-tRNA biosynthesis; selenocysteinyl-tRNA(Sec) biosynthesis; L-seryl-tRNA(Sec) from L-serine and tRNA(Sec): step 1/1. Catalyzes the attachment of serine to tRNA(Ser). Is also able to aminoacylate tRNA(Sec) with serine, to form the misacylated tRNA L-seryl-tRNA(Sec), which will be further converted into selenocysteinyl-tRNA(Sec). In Mycolicibacterium smegmatis (strain ATCC 700084 / mc(2)155) (Mycobacterium smegmatis), this protein is Serine--tRNA ligase.